The chain runs to 400 residues: NADH dehydrogenase-like protein Rv1812c (400 aa).

It belongs to the NADH dehydrogenase family. The cofactor is FAD.

This is NADH dehydrogenase-like protein Rv1812c from Mycobacterium tuberculosis (strain ATCC 25618 / H37Rv).